The sequence spans 238 residues: Large ribosomal subunit protein uL3 (238 aa).

The protein belongs to the universal ribosomal protein uL3 family. As to quaternary structure, part of the 50S ribosomal subunit. Forms a cluster with proteins L14 and L19.

One of the primary rRNA binding proteins, it binds directly near the 3'-end of the 23S rRNA, where it nucleates assembly of the 50S subunit. The sequence is that of Large ribosomal subunit protein uL3 from Mesoplasma florum (strain ATCC 33453 / NBRC 100688 / NCTC 11704 / L1) (Acholeplasma florum).